Consider the following 196-residue polypeptide: S-norcoclaurine synthase 2 (196 aa).

Positions 1–19 are cleaved as a signal peptide; it reads MRMEVVLVVFLMFIGTINC. 104–106 contributes to the dopamine binding site; sequence YRE. The Proton donor role is filled by Lys118. (4-hydroxyphenyl)acetaldehyde is bound at residue Asp137.

This sequence belongs to the BetVI family.

It carries out the reaction (4-hydroxyphenyl)acetaldehyde + dopamine = (S)-norcoclaurine + H2O. Not inhibited by O-phenanthroline or EDTA. Its function is as follows. Involved in the biosynthesis of the common precursor of all benzylisoquinoline alkaloids such as morphine, sanguinarine, codeine or berberine. Condenses dopamine and pyruvic acid or 4-hydroxyphenylpyruvate. The polypeptide is S-norcoclaurine synthase 2 (PR10A) (Coptis japonica (Japanese goldthread)).